Consider the following 190-residue polypeptide: Jupiter microtubule associated homolog 2 (190 aa).

Met-1 is modified (N-acetylmethionine). Polar residues predominate over residues 1 to 15 (MFQGADSQAGKSGSR). A disordered region spans residues 1–190 (MFQGADSQAG…PGGKSSLSFY (190 aa)). Lys-11 is modified (N6-acetyllysine). Ser-30 bears the Phosphoserine mark. The span at 35 to 44 (ISSSKPNRMA) shows a compositional bias: polar residues. Phosphoserine is present on residues Ser-45, Ser-69, and Ser-97. Composition is skewed to basic and acidic residues over residues 110–129 (KPKDHVLLCEGEDSKSDLKA) and 138–153 (EQSDKGSSKEVEHAKI). Ser-144 carries the post-translational modification Phosphoserine.

The protein belongs to the JUPITER family. As to quaternary structure, monomer. Dimer. Interacts with TPCN1.

Its subcellular location is the cytoplasm. The protein resides in the nucleus. Its function is as follows. Nicotinic acid adenine dinucleotide phosphate (NAADP) binding protein required for NAADP-evoked intracellular calcium release. Confers NAADP-sensitivity to the two pore channels (TPCs) complex. Enables NAADP to activate Ca(2+) release from the endoplasmic reticulum through ryanodine receptors. In Mus musculus (Mouse), this protein is Jupiter microtubule associated homolog 2.